The sequence spans 152 residues: Aspartate 1-decarboxylase (152 aa).

S24 serves as the catalytic Schiff-base intermediate with substrate; via pyruvic acid. At S24 the chain carries Pyruvic acid (Ser). T56 lines the substrate pocket. The Proton donor role is filled by Y57. Residue 72–74 (GAA) coordinates substrate.

It belongs to the PanD family. Heterooctamer of four alpha and four beta subunits. The cofactor is pyruvate. Is synthesized initially as an inactive proenzyme, which is activated by self-cleavage at a specific serine bond to produce a beta-subunit with a hydroxyl group at its C-terminus and an alpha-subunit with a pyruvoyl group at its N-terminus.

The protein resides in the cytoplasm. It carries out the reaction L-aspartate + H(+) = beta-alanine + CO2. The protein operates within cofactor biosynthesis; (R)-pantothenate biosynthesis; beta-alanine from L-aspartate: step 1/1. In terms of biological role, catalyzes the pyruvoyl-dependent decarboxylation of aspartate to produce beta-alanine. The chain is Aspartate 1-decarboxylase from Rhodospirillum centenum (strain ATCC 51521 / SW).